Consider the following 406-residue polypeptide: Ribose-phosphate pyrophosphokinase 3, mitochondrial (406 aa).

Residues 1–32 (MAATPHRHLLQPCKNPAISSSETLKPSSSFSL) are disordered. The N-terminal 87 residues, 1–87 (MAATPHRHLL…RRFQMSSNQE (87 aa)), are a transit peptide targeting the mitochondrion. The span at 18–32 (ISSSETLKPSSSFSL) shows a compositional bias: low complexity. The Mg(2+) site is built by D226 and H228. Residues 309-324 (GRHVVIVDDLVQSGGT) are binding of phosphoribosylpyrophosphate.

The protein belongs to the ribose-phosphate pyrophosphokinase family.

The protein resides in the mitochondrion. The catalysed reaction is D-ribose 5-phosphate + ATP = 5-phospho-alpha-D-ribose 1-diphosphate + AMP + H(+). The polypeptide is Ribose-phosphate pyrophosphokinase 3, mitochondrial (PRS3) (Spinacia oleracea (Spinach)).